Consider the following 502-residue polypeptide: Zinc finger protein 3 homolog (502 aa).

Basic and acidic residues-rich tracts occupy residues Met1–Glu13 and Pro80–Arg93. Disordered regions lie at residues Met1–Glu26 and Leu47–Thr103. Glycyl lysine isopeptide (Lys-Gly) (interchain with G-Cter in SUMO2) cross-links involve residues Lys6 and Lys11. C2H2-type zinc fingers lie at residues His141–His163, Phe169–His191, Phe197–His219, Tyr225–His247, Tyr253–His275, His281–His303, Tyr309–His331, Tyr337–His359, Tyr365–His387, Tyr393–His415, His421–His443, Tyr449–His471, and Tyr477–His499.

This sequence belongs to the krueppel C2H2-type zinc-finger protein family.

The protein resides in the nucleus. In terms of biological role, may be involved in transcriptional regulation. This Homo sapiens (Human) protein is Zinc finger protein 3 homolog (ZFP3).